A 164-amino-acid polypeptide reads, in one-letter code: 16S rRNA aminocarboxypropyltransferase (164 aa).

Residues threonine 18, isoleucine 66, leucine 87, and serine 106 each coordinate S-adenosyl-L-methionine.

It belongs to the TDD superfamily. TSR3 family.

It localises to the cytoplasm. It carries out the reaction an N(1)-methylpseudouridine in rRNA + S-adenosyl-L-methionine = N(1)-methyl-N(3)-[(3S)-3-amino-3-carboxypropyl]pseudouridine in rRNA + S-methyl-5'-thioadenosine + H(+). In terms of biological role, aminocarboxypropyltransferase that catalyzes the aminocarboxypropyl transfer on pseudouridine corresponding to position 914 in M.jannaschii 16S rRNA. It constitutes the last step in biosynthesis of the hypermodified N1-methyl-N3-(3-amino-3-carboxypropyl) pseudouridine (m1acp3-Psi). In Thermoplasma volcanium (strain ATCC 51530 / DSM 4299 / JCM 9571 / NBRC 15438 / GSS1), this protein is 16S rRNA aminocarboxypropyltransferase.